A 339-amino-acid polypeptide reads, in one-letter code: Anthranilate phosphoribosyltransferase (339 aa).

Residues Gly80, 83 to 84 (GD), Thr88, 90 to 93 (NIST), 108 to 116 (KHGNRAMSS), and Ser120 each bind 5-phospho-alpha-D-ribose 1-diphosphate. Gly80 lines the anthranilate pocket. Ser92 contacts Mg(2+). Asn111 contacts anthranilate. Position 166 (Arg166) interacts with anthranilate. Residues Asp225 and Glu226 each contribute to the Mg(2+) site.

The protein belongs to the anthranilate phosphoribosyltransferase family. In terms of assembly, homodimer. Mg(2+) is required as a cofactor.

The catalysed reaction is N-(5-phospho-beta-D-ribosyl)anthranilate + diphosphate = 5-phospho-alpha-D-ribose 1-diphosphate + anthranilate. It participates in amino-acid biosynthesis; L-tryptophan biosynthesis; L-tryptophan from chorismate: step 2/5. In terms of biological role, catalyzes the transfer of the phosphoribosyl group of 5-phosphorylribose-1-pyrophosphate (PRPP) to anthranilate to yield N-(5'-phosphoribosyl)-anthranilate (PRA). The chain is Anthranilate phosphoribosyltransferase from Chloroflexus aurantiacus (strain ATCC 29366 / DSM 635 / J-10-fl).